The sequence spans 309 residues: ATP synthase gamma chain (309 aa).

The protein belongs to the ATPase gamma chain family. As to quaternary structure, F-type ATPases have 2 components, CF(1) - the catalytic core - and CF(0) - the membrane proton channel. CF(1) has five subunits: alpha(3), beta(3), gamma(1), delta(1), epsilon(1). CF(0) has three main subunits: a, b and c.

The protein localises to the cell membrane. Produces ATP from ADP in the presence of a proton gradient across the membrane. The gamma chain is believed to be important in regulating ATPase activity and the flow of protons through the CF(0) complex. The sequence is that of ATP synthase gamma chain from Mycolicibacterium gilvum (strain PYR-GCK) (Mycobacterium gilvum (strain PYR-GCK)).